A 477-amino-acid polypeptide reads, in one-letter code: 3-sulfolactaldehyde dehydrogenase (477 aa).

232–233 (GS) lines the NAD(+) pocket. Glutamate 252 functions as the Proton acceptor in the catalytic mechanism. Leucine 253 serves as a coordination point for NAD(+). Cysteine 286 acts as the Nucleophile in catalysis. Position 380 (glutamate 380) interacts with NAD(+).

The protein belongs to the aldehyde dehydrogenase family.

It catalyses the reaction (2S)-3-sulfolactaldehyde + NAD(+) + H2O = (2S)-3-sulfolactate + NADH + 2 H(+). In terms of biological role, part of the sulfo-TAL (or sulfo-SFT) pathway, a D-sulfoquinovose degradation pathway that produces sulfolactate (SL). Catalyzes the oxidation of 3-sulfolactaldehyde (SLA) to sulfolactate (SL). This is 3-sulfolactaldehyde dehydrogenase from Priestia aryabhattai (Bacillus aryabhattai).